Reading from the N-terminus, the 43-residue chain is Protein PsbN (43 aa).

The chain crosses the membrane as a helical span at residues 5 to 27; it reads TFLSIFISAALLGITGYSIYTAF.

This sequence belongs to the PsbN family.

It is found in the plastid. The protein resides in the cyanelle thylakoid membrane. Functionally, may play a role in photosystem I and II biogenesis. In Cyanophora paradoxa, this protein is Protein PsbN.